The chain runs to 150 residues: Urease accessory protein UreE (150 aa).

The protein belongs to the UreE family.

The protein localises to the cytoplasm. Involved in urease metallocenter assembly. Binds nickel. Probably functions as a nickel donor during metallocenter assembly. This is Urease accessory protein UreE from Staphylococcus aureus (strain MRSA252).